We begin with the raw amino-acid sequence, 532 residues long: 2,3-bisphosphoglycerate-independent phosphoglycerate mutase (532 aa).

Mn(2+) contacts are provided by D15 and S65. The active-site Phosphoserine intermediate is the S65. Substrate-binding positions include H126, 156-157, R188, R194, 258-261, and K331; these read RD and RPDR. Mn(2+) is bound by residues D398, H402, D439, H440, and H457.

This sequence belongs to the BPG-independent phosphoglycerate mutase family. As to quaternary structure, monomer. Requires Mn(2+) as cofactor.

It catalyses the reaction (2R)-2-phosphoglycerate = (2R)-3-phosphoglycerate. It participates in carbohydrate degradation; glycolysis; pyruvate from D-glyceraldehyde 3-phosphate: step 3/5. Its function is as follows. Catalyzes the interconversion of 2-phosphoglycerate and 3-phosphoglycerate. The protein is 2,3-bisphosphoglycerate-independent phosphoglycerate mutase of Nostoc punctiforme (strain ATCC 29133 / PCC 73102).